The primary structure comprises 340 residues: Glyceraldehyde-3-phosphate dehydrogenase (340 aa).

NAD(+) contacts are provided by residues R12–I13, D40, K85, and S128. Residues S158–T160, T189, R204, T217–G218, and R240 contribute to the D-glyceraldehyde 3-phosphate site. The active-site Nucleophile is the C159. Residue K257 forms an Isoglutamyl lysine isopeptide (Lys-Gln) (interchain with Q-Cter in protein Pup) linkage. N321 is a binding site for NAD(+).

This sequence belongs to the glyceraldehyde-3-phosphate dehydrogenase family. Homotetramer.

The protein resides in the cytoplasm. The catalysed reaction is D-glyceraldehyde 3-phosphate + phosphate + NAD(+) = (2R)-3-phospho-glyceroyl phosphate + NADH + H(+). Its pathway is carbohydrate degradation; glycolysis; pyruvate from D-glyceraldehyde 3-phosphate: step 1/5. In terms of biological role, catalyzes the oxidative phosphorylation of glyceraldehyde 3-phosphate (G3P) to 1,3-bisphosphoglycerate (BPG) using the cofactor NAD. The first reaction step involves the formation of a hemiacetal intermediate between G3P and a cysteine residue, and this hemiacetal intermediate is then oxidized to a thioester, with concomitant reduction of NAD to NADH. The reduced NADH is then exchanged with the second NAD, and the thioester is attacked by a nucleophilic inorganic phosphate to produce BPG. The protein is Glyceraldehyde-3-phosphate dehydrogenase (gapA) of Mycolicibacterium smegmatis (strain ATCC 700084 / mc(2)155) (Mycobacterium smegmatis).